The primary structure comprises 303 residues: MNAYLDISPEVQTALAAGEPVVALESTIISHGMPWPQNAETALQVEQIVRDNGAVPATIAIIKGRLKVGLSKEEIEYLGKAGLNVTKASRRDIPFIIARGGDGATTVASTMILAAMAGVKVFATGGIGGVHRGAQETFDISADLQELAHTNVAVICAGAKSILDLGLTREYLETHGVPLVGYQTSTLPAFYTRDSDFDVDYQLDTPEQIAQALQAKWEMGLQGGVVIANPIPEAYAMDRGKIDAAISAALAEMDDKGVSGKDSTPFLLAKVAEITGGDSLKANIQLVFNNAALAARIAASYYA.

Residue Glu25 is the Proton donor of the active site. Substrate is bound by residues Lys87 and Val107. Residue Asp139 coordinates Mn(2+). Position 141-143 (141-143) interacts with substrate; sequence SAD. The Nucleophile role is filled by Lys160.

It belongs to the pseudouridine-5'-phosphate glycosidase family. In terms of assembly, homotrimer. The cofactor is Mn(2+).

It catalyses the reaction D-ribose 5-phosphate + uracil = psi-UMP + H2O. Its function is as follows. Catalyzes the reversible cleavage of pseudouridine 5'-phosphate (PsiMP) to ribose 5-phosphate and uracil. Functions biologically in the cleavage direction, as part of a pseudouridine degradation pathway. This Hahella chejuensis (strain KCTC 2396) protein is Pseudouridine-5'-phosphate glycosidase.